Here is a 98-residue protein sequence, read N- to C-terminus: Endoribonuclease antitoxin GhoS (98 aa).

Monomer. Post-translationally, unlike other TA antitoxins, this protein is stable.

Functionally, antitoxin component of a type V toxin-antitoxin (TA) system. Neutralizes the toxic effects of toxin GhoT by digesting ghoT transcripts in a sequence-specific manner. In concert with GhoT is involved in reducing cell growth during antibacterial stress. The chain is Endoribonuclease antitoxin GhoS from Escherichia coli O157:H7.